The sequence spans 1342 residues: DNA-directed RNA polymerase subunit beta (1342 aa).

This sequence belongs to the RNA polymerase beta chain family. In terms of assembly, the RNAP catalytic core consists of 2 alpha, 1 beta, 1 beta' and 1 omega subunit. When a sigma factor is associated with the core the holoenzyme is formed, which can initiate transcription.

The enzyme catalyses RNA(n) + a ribonucleoside 5'-triphosphate = RNA(n+1) + diphosphate. Its function is as follows. DNA-dependent RNA polymerase catalyzes the transcription of DNA into RNA using the four ribonucleoside triphosphates as substrates. The chain is DNA-directed RNA polymerase subunit beta from Aliivibrio fischeri (strain MJ11) (Vibrio fischeri).